Consider the following 59-residue polypeptide: Large ribosomal subunit protein uL30 (59 aa).

Belongs to the universal ribosomal protein uL30 family. Part of the 50S ribosomal subunit.

The protein is Large ribosomal subunit protein uL30 of Haemophilus influenzae (strain 86-028NP).